Reading from the N-terminus, the 348-residue chain is Phospho-2-dehydro-3-deoxyheptonate aldolase, Trp-sensitive (348 aa).

Belongs to the class-I DAHP synthase family.

It carries out the reaction D-erythrose 4-phosphate + phosphoenolpyruvate + H2O = 7-phospho-2-dehydro-3-deoxy-D-arabino-heptonate + phosphate. It functions in the pathway metabolic intermediate biosynthesis; chorismate biosynthesis; chorismate from D-erythrose 4-phosphate and phosphoenolpyruvate: step 1/7. In terms of biological role, stereospecific condensation of phosphoenolpyruvate (PEP) and D-erythrose-4-phosphate (E4P) giving rise to 3-deoxy-D-arabino-heptulosonate-7-phosphate (DAHP). The polypeptide is Phospho-2-dehydro-3-deoxyheptonate aldolase, Trp-sensitive (aroH) (Buchnera aphidicola subsp. Baizongia pistaciae (strain Bp)).